The chain runs to 994 residues: cGMP-dependent protein kinase (994 aa).

The interval 1-162 (MGACISKNSS…QDDSHTEEEK (162 aa)) is disordered. The N-myristoyl glycine moiety is linked to residue glycine 2. A lipid anchor (S-palmitoyl cysteine) is attached at cysteine 4. 2 stretches are compositionally biased toward low complexity: residues 9–22 (SSAR…LSAS) and 33–46 (GAAG…GAAE). 2 stretches are compositionally biased toward basic and acidic residues: residues 65 to 80 (ELER…REEP) and 133 to 162 (EGPK…EEEK). CNMP-binding domain stretches follow at residues 189–305 (VCSS…FLAS), 308–407 (FFEM…RVLG), 463–539 (GIRF…ATLG), and 561–660 (IFRY…NEII). 3',5'-cyclic GMP is bound by residues glycine 253, glutamate 254, alanine 256, arginine 263, and serine 264. Residues arginine 616, glycine 625, glutamate 626, alanine 628, arginine 635, and threonine 636 each coordinate 3',5'-cyclic GMP. In terms of domain architecture, Protein kinase spans 684–941 (LQVVRVVGRG…YKDIKEHAFF (258 aa)). Residues 690 to 698 (VGRGTFGTV) and lysine 713 contribute to the ATP site. Aspartate 807 (proton acceptor) is an active-site residue. The AGC-kinase C-terminal domain maps to 942 to 994 (GDFDWDKLAGRGLPPPLAPKGETYAEDTEQSSFELDEDDTIVLEDEYDWDKDF). Residues 954–976 (LPPPLAPKGETYAEDTEQSSFEL) form a disordered region. Residues 965–976 (YAEDTEQSSFEL) are compositionally biased toward acidic residues.

It belongs to the protein kinase superfamily. AGC Ser/Thr protein kinase family. cGMP subfamily. Mg(2+) is required as a cofactor.

It is found in the cytoplasm. The protein localises to the membrane. The protein resides in the cell membrane. It carries out the reaction L-seryl-[protein] + ATP = O-phospho-L-seryl-[protein] + ADP + H(+). It catalyses the reaction L-threonyl-[protein] + ATP = O-phospho-L-threonyl-[protein] + ADP + H(+). Activated by cGMP. The cGMP-binding domains acts cooperatively to activate PKG. Inhibited by the antiparasitic small molecule 4-[2-(4-fluorophenyl)-5-(1-methylpiperidine-4-yl)-1Hpyrrol- 3-yl]pyridine (compound 1). Serine/threonine protein kinase which acts as a downstream effector of the second messenger cGMP. Plays an essential role in tachyzoite invasion of and egress from host cells. During invasion of host cells, regulates the apico-basal flux of F-actin probably via Ca(2+)-mediated activation of CDPK1. In tachyzoites, required for microneme secretion. Required for tachyzoite gliding motility. In terms of biological role, plays an essential role in parasite invasion of and egress from host cells, and microneme secretion. Its function is as follows. Dispensable for parasite invasion of and egress from host cells, and microneme secretion. This chain is cGMP-dependent protein kinase, found in Toxoplasma gondii.